The primary structure comprises 359 residues: Aminomethyltransferase (359 aa).

This sequence belongs to the GcvT family. The glycine cleavage system is composed of four proteins: P, T, L and H.

The catalysed reaction is N(6)-[(R)-S(8)-aminomethyldihydrolipoyl]-L-lysyl-[protein] + (6S)-5,6,7,8-tetrahydrofolate = N(6)-[(R)-dihydrolipoyl]-L-lysyl-[protein] + (6R)-5,10-methylene-5,6,7,8-tetrahydrofolate + NH4(+). The glycine cleavage system catalyzes the degradation of glycine. The sequence is that of Aminomethyltransferase from Synechococcus sp. (strain RCC307).